Consider the following 151-residue polypeptide: UPF0178 protein Tcr_1995 (151 aa).

Residues 116-135 are disordered; sequence RSSGVDTGGPPPLNQKDRQA.

This sequence belongs to the UPF0178 family.

This Hydrogenovibrio crunogenus (strain DSM 25203 / XCL-2) (Thiomicrospira crunogena) protein is UPF0178 protein Tcr_1995.